The sequence spans 328 residues: DNA-directed RNA polymerase subunit alpha (328 aa).

An alpha N-terminal domain (alpha-NTD) region spans residues 1–231 (MIYQMQMPTK…DHITFFANFS (231 aa)). Residues 247–328 (DEFESMRKLL…MDITRYQLKG (82 aa)) are alpha C-terminal domain (alpha-CTD).

It belongs to the RNA polymerase alpha chain family. In terms of assembly, homodimer. The RNAP catalytic core consists of 2 alpha, 1 beta, 1 beta' and 1 omega subunit. When a sigma factor is associated with the core the holoenzyme is formed, which can initiate transcription.

The catalysed reaction is RNA(n) + a ribonucleoside 5'-triphosphate = RNA(n+1) + diphosphate. Its function is as follows. DNA-dependent RNA polymerase catalyzes the transcription of DNA into RNA using the four ribonucleoside triphosphates as substrates. This Chlorobaculum tepidum (strain ATCC 49652 / DSM 12025 / NBRC 103806 / TLS) (Chlorobium tepidum) protein is DNA-directed RNA polymerase subunit alpha.